An 81-amino-acid chain; its full sequence is Acyl carrier protein (81 aa).

The Carrier domain maps to 2–80 (SKVDNIEQKV…DVVNYIKEHK (79 aa)). Position 40 is an O-(pantetheine 4'-phosphoryl)serine (Ser-40).

The protein belongs to the acyl carrier protein (ACP) family. Post-translationally, 4'-phosphopantetheine is transferred from CoA to a specific serine of apo-ACP by AcpS. This modification is essential for activity because fatty acids are bound in thioester linkage to the sulfhydryl of the prosthetic group.

It is found in the cytoplasm. Its pathway is lipid metabolism; fatty acid biosynthesis. Carrier of the growing fatty acid chain in fatty acid biosynthesis. In Rickettsia bellii (strain OSU 85-389), this protein is Acyl carrier protein.